The chain runs to 111 residues: High mobility group protein Z (111 aa).

Residues Pro-6–Glu-72 constitute a DNA-binding region (HMG box). Phosphoserine is present on Ser-11. A disordered region spans residues Glu-72–Glu-111. The segment covering Pro-82–Lys-98 has biased composition (basic residues). Residues Ser-102–Glu-111 are compositionally biased toward acidic residues.

This sequence belongs to the HMGB family.

The protein resides in the nucleus. Its subcellular location is the chromosome. The protein is High mobility group protein Z (HmgZ) of Drosophila melanogaster (Fruit fly).